The chain runs to 1679 residues: Lysophospholipase NTE1 (1679 aa).

Low complexity predominate over residues 1–20 (MRSMNCTTNNTNNTGQNTKN). The interval 1 to 21 (MRSMNCTTNNTNNTGQNTKNS) is disordered. Topologically, residues 1–49 (MRSMNCTTNNTNNTGQNTKNSLGSSFNSSNYTSYRFQTCLTDQIISEAQ) are cytoplasmic. The helical transmembrane segment at 50-70 (TWSLSSLFNFSWVVSYFVMGA) threads the bilayer. Topologically, residues 71 to 103 (SRMIFRYGWYLATLSLLRIPKWIFFKLHHVQFT) are lumenal. A helical transmembrane segment spans residues 104 to 124 (LSFWLILFALAVIVFVTYTIM). Over 125-1679 (KERILSQYKR…EFLLHRRNSI (1555 aa)) the chain is Cytoplasmic. Positions 261 to 274 (SDKDHGDETDHSDT) are enriched in basic and acidic residues. A disordered region spans residues 261–304 (SDKDHGDETDHSDTDGLDDQDRDEEDEEEDDDIDNYDTKSCSSN). The span at 275-295 (DGLDDQDRDEEDEEEDDDIDN) shows a compositional bias: acidic residues. Phosphoserine is present on residues Ser-300 and Ser-312. Disordered regions lie at residues 498 to 527 (SSGSADLEPKPKNSNASSKLKKPPKAKPSD) and 586 to 672 (DILS…VSPR). 2 stretches are compositionally biased toward polar residues: residues 592 to 606 (PIHNNNRNKSNGINT) and 630 to 652 (FSSLSPELRNAQLSTSPLSLDNT). A phosphoserine mark is found at Ser-632, Ser-634, Ser-653, Ser-661, Ser-670, Ser-680, and Ser-739. The tract at residues 775–800 (KEYTISNKRHNKSKSQDKKKPRAYKE) is disordered. Residues 788–800 (KSQDKKKPRAYKE) are compositionally biased toward basic and acidic residues. At Thr-803 the chain carries Phosphothreonine. A nucleoside 3',5'-cyclic phosphate-binding positions include 803–947 (TPNL…LTKL) and 943–1074 (SLTK…VAKK). The disordered stretch occupies residues 855–882 (SSSVVSSMSKPEQVSAQSSHKGENPHHT). Positions 862–873 (MSKPEQVSAQSS) are enriched in polar residues. The 165-residue stretch at 1373-1537 (LVLGGGGARG…VDNLPVTEMR (165 aa)) folds into the PNPLA domain. A GXGXXG motif is present at residues 1377–1382 (GGGARG). The GXSXG motif lies at 1404–1408 (GTSIG). Residue Ser-1406 is the Nucleophile of the active site. Asp-1524 serves as the catalytic Proton acceptor. The DGA/G signature appears at 1524–1526 (DGG).

Belongs to the NTE family.

The protein localises to the endoplasmic reticulum membrane. The protein resides in the lipid droplet. It catalyses the reaction a 1-acyl-sn-glycero-3-phosphocholine + H2O = sn-glycerol 3-phosphocholine + a fatty acid + H(+). It carries out the reaction a 1,2-diacyl-sn-glycero-3-phosphocholine + 2 H2O = sn-glycerol 3-phosphocholine + 2 a carboxylate + 2 H(+). Positively regulated by SEC14. Inhibited by organophosphorus esters in the order phenyl saligenin phosphate (PSP) &gt; phenyldipentyl phosphinate (PDPP) = diisopropyl fluorophosphate (DFP) &gt; and paraoxon (PXN). Intracellular phospholipase B that catalyzes the double deacylation of phosphatidylcholine (PC) to glycerophosphocholine (GroPCho). Plays an important role in membrane lipid homeostasis. Responsible for the rapid PC turnover in response to inositol, elevated temperatures, or when choline is present in the growth medium. NTE1 activity impacts the repressing transcriptional activity of OPI1, the main regulator of phospholipid synthesis gene transcription. The sequence is that of Lysophospholipase NTE1 (NTE1) from Saccharomyces cerevisiae (strain ATCC 204508 / S288c) (Baker's yeast).